The following is a 167-amino-acid chain: UPF0336 protein MAP_4109 (167 aa).

The MaoC-like domain occupies 21-124 (GREQLRQFAL…RFGADIVVTK (104 aa)).

It belongs to the UPF0336 family.

The protein is UPF0336 protein MAP_4109 of Mycolicibacterium paratuberculosis (strain ATCC BAA-968 / K-10) (Mycobacterium paratuberculosis).